Consider the following 143-residue polypeptide: Large ribosomal subunit protein uL11 (143 aa).

The protein belongs to the universal ribosomal protein uL11 family. In terms of assembly, part of the ribosomal stalk of the 50S ribosomal subunit. Interacts with L10 and the large rRNA to form the base of the stalk. L10 forms an elongated spine to which L12 dimers bind in a sequential fashion forming a multimeric L10(L12)X complex. One or more lysine residues are methylated.

In terms of biological role, forms part of the ribosomal stalk which helps the ribosome interact with GTP-bound translation factors. In Psychrobacter sp. (strain PRwf-1), this protein is Large ribosomal subunit protein uL11.